The following is a 66-amino-acid chain: MCKLRTSKSIIKRFKFKSKNKILRRMAGRSHLLQKKSSKRKQKLRKIVNLKKIDISSWKFRVPYID.

The protein belongs to the bacterial ribosomal protein bL35 family.

Its subcellular location is the plastid. The protein localises to the chloroplast. This Gracilaria tenuistipitata var. liui (Red alga) protein is Large ribosomal subunit protein bL35c.